A 241-amino-acid chain; its full sequence is Large ribosomal subunit protein uL3 (241 aa).

Disordered stretches follow at residues valine 139–methionine 166 and alanine 214–alanine 241. Glutamine 151 carries the post-translational modification N5-methylglutamine. A compositionally biased stretch (low complexity) spans alanine 229–alanine 241.

Part of the 50S ribosomal subunit. Forms a cluster with proteins L14 and L19. Methylated, on either Lys-155 or Lys-158. In terms of processing, methylated by PrmB.

One of the primary rRNA binding proteins, it binds directly near the 3'-end of the 23S rRNA, where it nucleates assembly of the 50S subunit. This Rhodopseudomonas palustris (strain ATCC BAA-98 / CGA009) protein is Large ribosomal subunit protein uL3.